The chain runs to 383 residues: uncharacterized protein (383 aa).

Disordered regions lie at residues 27-66 and 242-281; these read ENNNTNNNTNSNTNSNNKNNNNNNNNKSNNKKQNNNNKKP and LITTKDSNEQTSSSSSSSTAITTNTNCSNSKSSSQPITRR. 2 stretches are compositionally biased toward low complexity: residues 28-63 and 242-275; these read NNNTNNNTNSNTNSNNKNNNNNNNNKSNNKKQNNNN and LITTKDSNEQTSSSSSSSTAITTNTNCSNSKSSS.

This is an uncharacterized protein from Dictyostelium discoideum (Social amoeba).